The sequence spans 406 residues: O-succinylhomoserine sulfhydrylase (406 aa).

An N6-(pyridoxal phosphate)lysine modification is found at lysine 219.

It belongs to the trans-sulfuration enzymes family. MetZ subfamily. In terms of assembly, homotetramer. It depends on pyridoxal 5'-phosphate as a cofactor.

The enzyme catalyses O-succinyl-L-homoserine + hydrogen sulfide = L-homocysteine + succinate. Its pathway is amino-acid biosynthesis; L-methionine biosynthesis via de novo pathway; L-homocysteine from O-succinyl-L-homoserine: step 1/1. Its function is as follows. Catalyzes the formation of L-homocysteine from O-succinyl-L-homoserine (OSHS) and hydrogen sulfide. This is O-succinylhomoserine sulfhydrylase from Mycobacterium tuberculosis (strain CDC 1551 / Oshkosh).